The following is a 657-amino-acid chain: UvrABC system protein B (657 aa).

Residues 23–414 form the Helicase ATP-binding domain; that stretch reads KSIKKGNKYQ…KENIFHQIMR (392 aa). Residue 36–43 participates in ATP binding; sequence GVTGSGKT. The short motif at 89–112 is the Beta-hairpin element; sequence YYDYYQPEAYIPRTDVFIEKDSST. The Helicase C-terminal domain maps to 431–593; sequence QVEILFDEAK…ITPTSVKRHI (163 aa). Positions 622–657 constitute a UVR domain; that stretch reads AKLVKELRKQMLEAAKALEFEKAAAIRDEINKLRDL.

This sequence belongs to the UvrB family. In terms of assembly, forms a heterotetramer with UvrA during the search for lesions. Interacts with UvrC in an incision complex.

The protein localises to the cytoplasm. The UvrABC repair system catalyzes the recognition and processing of DNA lesions. A damage recognition complex composed of 2 UvrA and 2 UvrB subunits scans DNA for abnormalities. Upon binding of the UvrA(2)B(2) complex to a putative damaged site, the DNA wraps around one UvrB monomer. DNA wrap is dependent on ATP binding by UvrB and probably causes local melting of the DNA helix, facilitating insertion of UvrB beta-hairpin between the DNA strands. Then UvrB probes one DNA strand for the presence of a lesion. If a lesion is found the UvrA subunits dissociate and the UvrB-DNA preincision complex is formed. This complex is subsequently bound by UvrC and the second UvrB is released. If no lesion is found, the DNA wraps around the other UvrB subunit that will check the other stand for damage. This Campylobacter jejuni subsp. jejuni serotype O:2 (strain ATCC 700819 / NCTC 11168) protein is UvrABC system protein B.